We begin with the raw amino-acid sequence, 624 residues long: Steryl-sulfatase (624 aa).

The first 22 residues, 1–22 (MPRPRPLLLAVMAATLADIILA), serve as a signal peptide directing secretion. The Lumenal segment spans residues 24–192 (DPAPAGPAPR…GTVFGPALRV (169 aa)). The Ca(2+) site is built by Asp-43 and Asp-44. N-linked (GlcNAc...) asparagine glycosylation is present at Asn-55. Cys-83 provides a ligand contact to Ca(2+). Cys-83 serves as the catalytic Nucleophile. At Cys-83 the chain carries 3-oxoalanine (Cys). The active site involves His-144. Disulfide bonds link Cys-149-Cys-156 and Cys-178-Cys-250. Residues 193-216 (FAAGPLAALGASLAAMAAARWAGL) form a helical membrane-spanning segment. At 217–220 (ARVP) the chain is on the cytoplasmic side. Residues 221-242 (GWALAGTAAAMLAVGGPRSASC) traverse the membrane as a helical segment. Residues 243–624 (LGFRPANCFL…ATTRTQATPR (382 aa)) lie on the Lumenal side of the membrane. Ca(2+) contacts are provided by Asp-350 and His-351. 2 disulfides stabilise this stretch: Cys-454-Cys-495 and Cys-487-Cys-493. The N-linked (GlcNAc...) asparagine glycan is linked to Asn-465. The tract at residues 572–624 (GGAGGGAGAQDDSGHAHGDGSHAHDDPGHAQDRGDDDAHYGGHATTRTQATPR) is disordered. Residues 583-611 (DSGHAHGDGSHAHDDPGHAQDRGDDDAHY) show a composition bias toward basic and acidic residues.

The protein belongs to the sulfatase family. As to quaternary structure, homodimer. Ca(2+) serves as cofactor. In terms of processing, the conversion to 3-oxoalanine (also known as C-formylglycine, FGly), of a serine or cysteine residue in prokaryotes and of a cysteine residue in eukaryotes, is critical for catalytic activity.

It localises to the microsome membrane. Its subcellular location is the endoplasmic reticulum membrane. The catalysed reaction is dehydroepiandrosterone 3-sulfate + H2O = 3beta-hydroxyandrost-5-en-17-one + sulfate + H(+). It catalyses the reaction estrone 3-sulfate + H2O = estrone + sulfate + H(+). In terms of biological role, catalyzes the conversion of sulfated steroid precursors, such as dehydroepiandrosterone sulfate (DHEA-S) and estrone sulfate to the free steroid. This chain is Steryl-sulfatase (Sts), found in Mus musculus (Mouse).